Consider the following 211-residue polypeptide: Probable endopeptidase cgR_2070 (211 aa).

An N-terminal signal peptide occupies residues 1–35 (MGKHRRNNSNATRKAVAASAVALGATAAIASPAQA). Positions 97–211 (ASTGQAIVDA…YMPFHSAVRF (115 aa)) constitute a NlpC/P60 domain. C127 functions as the Nucleophile in the catalytic mechanism. H175 serves as the catalytic Proton acceptor. H187 is a catalytic residue.

The protein belongs to the peptidase C40 family.

Its subcellular location is the secreted. The chain is Probable endopeptidase cgR_2070 from Corynebacterium glutamicum (strain R).